The sequence spans 592 residues: Catabolite repression protein creC (592 aa).

The disordered stretch occupies residues 119 to 140 (NSALAAAPVKDPSKKRKPKNNI). 4 WD repeats span residues 248–288 (INSS…ALFI), 327–368 (LANQ…DVFR), 369–408 (SYYGGFTCVCWSPDGKYIVTGGQDDLVTIWSLPERKIIAR), and 411–455 (GHDS…LHRP). Disordered regions lie at residues 459 to 513 (HQTS…HPVE) and 556 to 592 (WDRPRENISDNYGDQKSSETLGTGKEAGHPASSMGSL). Composition is skewed to polar residues over residues 484–499 (SSGNRMRSDSQRTAAD) and 564–576 (SDNYGDQKSSETL). One copy of the WD 5 repeat lies at 529-566 (VGEDPICWLGFQEDTIMTSSLEGHIRTWDRPRENISDN).

Belongs to the WD repeat creC family. As to quaternary structure, interacts with creB.

Its function is as follows. Component of the regulatory network controlling carbon source utilization through ubiquitination and deubiquitination involving creA, creB, creC, creD and acrB. Required to prevent the proteolysis of the CreB deubiquitinating enzyme in the absence of carbon catabolite repression. CreB deubiquitinating enzyme stabilized in a complex with the CreC leads to the expression of genes such as those in the proline and quinate pathways. The chain is Catabolite repression protein creC (creC) from Emericella nidulans (strain FGSC A4 / ATCC 38163 / CBS 112.46 / NRRL 194 / M139) (Aspergillus nidulans).